Here is a 322-residue protein sequence, read N- to C-terminus: GDSL esterase/lipase At5g03600 (322 aa).

The active-site Nucleophile is serine 21. Active-site residues include aspartate 295 and histidine 298.

It belongs to the 'GDSL' lipolytic enzyme family.

The sequence is that of GDSL esterase/lipase At5g03600 from Arabidopsis thaliana (Mouse-ear cress).